A 103-amino-acid polypeptide reads, in one-letter code: Protamine-2 (103 aa).

Positions 1–103 are disordered; sequence MVRYRTRSLS…RTRRRRCRRY (103 aa). Serine 8 and serine 10 each carry phosphoserine. Basic and acidic residues predominate over residues 8–17; sequence SLSERPHEVH. Residues 18 to 29 are compositionally biased toward low complexity; it reads GQQVHGQDQGHN. Serine 37 is subject to Phosphoserine. Residues 39-48 are compositionally biased toward basic and acidic residues; it reads EHVEVYERTH. The span at 49–103 shows a compositional bias: basic residues; sequence QGHSHHRRRRCSQRRLHRIHRRRHRSCRRRRRRSCRHRRRHRRGCRTRRRRCRRY.

This sequence belongs to the protamine P2 family. As to quaternary structure, interacts with TDRP. Post-translationally, proteolytic processing into mature chains is required for histone eviction during spermatogenesis. Transition proteins (TNP1 and TNP2) are required for processing. As to expression, testis.

The protein localises to the nucleus. Its subcellular location is the chromosome. In terms of biological role, protamines substitute for histones in the chromatin of sperm during the haploid phase of spermatogenesis. They compact sperm DNA into a highly condensed, stable and inactive complex. This is Protamine-2 (PRM2) from Erythrocebus patas (Red guenon).